The following is a 439-amino-acid chain: Tol-Pal system protein TolB (439 aa).

Positions 1–22 are cleaved as a signal peptide; sequence MKKPLRWLAALTALLLPLSAFA.

The protein belongs to the TolB family. In terms of assembly, the Tol-Pal system is composed of five core proteins: the inner membrane proteins TolA, TolQ and TolR, the periplasmic protein TolB and the outer membrane protein Pal. They form a network linking the inner and outer membranes and the peptidoglycan layer.

The protein resides in the periplasm. In terms of biological role, part of the Tol-Pal system, which plays a role in outer membrane invagination during cell division and is important for maintaining outer membrane integrity. The protein is Tol-Pal system protein TolB of Xanthomonas campestris pv. campestris (strain 8004).